The primary structure comprises 326 residues: GTPase IMAP family member 5 (326 aa).

Over 1–297 (MEDHGFEELS…MLCRVTSCLD (297 aa)) the chain is Cytoplasmic. Residues 42 to 245 (SGLLRILLVG…HSNDLFVYTQ (204 aa)) enclose the AIG1-type G domain. GTP is bound by residues 51-59 (GKSGCGKSA), Ser72, 169-171 (HKE), and Asn206. Residues 298-318 (WHIAVSVLLIVLGLTLLITLI) traverse the membrane as a helical; Anchor for type IV membrane protein segment. Topologically, residues 319–326 (NMYIGRWK) are lumenal.

It belongs to the TRAFAC class TrmE-Era-EngA-EngB-Septin-like GTPase superfamily. AIG1/Toc34/Toc159-like paraseptin GTPase family. IAN subfamily. Interacts with BAD, BAK1, BAX, BCL2, BCL2L1/Bcl-xL and BCL2L11/BimEL. The interaction with BAX is increased, when cells initiate apoptosis upon IL2 withdrawal. Forms a complex with BCL2L1 or MCL1 and HSPA8/HSC70; the interaction between HSPA8 and BCL2L1 or MCL1 is impaired in the absence of GIMAP5. May interact (via N-terminus) with microtubules. As to expression, primarily expressed in spleen, heart, lung and intestine and, at lower levels, in kidney, stomach and muscle. Expressed in thymus and lymph nodes (at protein level). In the spleen, expressed in periarteriolar lymphatic sheets. Isoform 2: Expressed at higher levels in T lymphocytes compared to isoform 1.

The protein localises to the lysosome membrane. It localises to the endosome. Its subcellular location is the multivesicular body membrane. The protein resides in the endosome membrane. In terms of biological role, required for mitochondrial integrity and T-cell survival. May contribute to T-cell quiescence. Its function is as follows. Plays a role in T lymphocyte development and the optimal generation of CD4/CD8 double-positive thymocytes. Inhibitor of GSK3A, possibly by sequestering GSK3A in cytoplasmic vesicles and impairing its translocation to the nucleus. Consequently, impairs GSK3A-dependent transcriptional program and regulation of the DNA damage response occurring during T cells proliferation. Required for the survival of peripheral T cells, natural killer (NK) and NK T-cell development and the maintenance of normal liver function. Promotes the survival of quiescent T-cells. May regulate Ca(2+) homeostasis by modulating lysosomal Ca(2+) stores, preventing its accumulation in the absence of T cell activation. May play a role in mitochondrial DNA segregation in hematopoietic tissues. Is a regulator of liver endothelial cell homeostasis. The chain is GTPase IMAP family member 5 (Gimap5) from Rattus norvegicus (Rat).